The sequence spans 286 residues: Probable endonuclease 4 (286 aa).

Zn(2+)-binding residues include H71, H111, E147, D181, H184, H218, D231, H233, and E263.

Belongs to the AP endonuclease 2 family. It depends on Zn(2+) as a cofactor.

The enzyme catalyses Endonucleolytic cleavage to 5'-phosphooligonucleotide end-products.. Endonuclease IV plays a role in DNA repair. It cleaves phosphodiester bonds at apurinic or apyrimidinic (AP) sites, generating a 3'-hydroxyl group and a 5'-terminal sugar phosphate. This Vibrio cholerae serotype O1 (strain ATCC 39541 / Classical Ogawa 395 / O395) protein is Probable endonuclease 4.